The following is a 1040-amino-acid chain: Neprilysin-4 (1040 aa).

Residues 1-27 (MSRHSQLKLAMPSVHGAPATAPGSPMN) form a disordered region. Residues 1–45 (MSRHSQLKLAMPSVHGAPATAPGSPMNAKARSVKLGLGVNQRTGR) are required for maintaining muscle integrity. Over 1–55 (MSRHSQLKLAMPSVHGAPATAPGSPMNAKARSVKLGLGVNQRTGRVQWCPGLTCC) the chain is Cytoplasmic. Residues 56–76 (KMLLLLPVVMLPLTLVLILIM) form a helical; Signal-anchor for type II membrane protein membrane-spanning segment. At 77–1040 (RLDGMLAALQ…MNPQKKCSVW (964 aa)) the chain is on the extracellular side. A Peptidase M13 domain is found at 251-1040 (EEGTREGIRM…MNPQKKCSVW (790 aa)). 4 cysteine pairs are disulfide-bonded: C277/C1025, C285/C985, C452/C700, and C909/C1037. N-linked (GlcNAc...) asparagine glycans are attached at residues N387, N593, N723, and N819. Zn(2+) is bound at residue H872. The active site involves E873. Zn(2+) is bound at residue H876. An N-linked (GlcNAc...) asparagine glycan is attached at N916. E934 lines the Zn(2+) pocket. The Proton donor role is filled by D938. Residue N969 is glycosylated (N-linked (GlcNAc...) asparagine).

It belongs to the peptidase M13 family. In terms of assembly, interacts (via intracellular domain) with the putative carbohydrate kinase CG3534. Zn(2+) is required as a cofactor. In terms of tissue distribution, expressed in the gonads and testes of adults, and the adult and larval brain (at protein level). In embryos, expressed in the pericardial, muscle founder and glia cells (at protein level). In stage 12 embryos, expressed in specific dorsal muscle founder cells such as DA1 and DO2, and also in the certain pericardial progenitor cells where expression persists throughout embryogenesis. Expressed in the glia cells of the embryonic, larval and adult central nervous system. Expressed in the somatic muscles of larvae, pupae and adults. Isoform A: Detected in the male abdomen (at protein level). Isoform B: Not detected in the male or female abdomen (at protein level).

The protein resides in the cell membrane. It localises to the sarcoplasmic reticulum. It is found in the cytoplasm. It carries out the reaction Preferential cleavage of polypeptides between hydrophobic residues, particularly with Phe or Tyr at P1'.. Its function is as follows. Metalloendoprotease which cleaves peptides at the amino side of hydrophobic residues - such as the hormones Akh and Dh31, and the neuropeptides Allatostatins (AST1, AST2, AST3 and AST4), Crz, Drosulfakinins (DSK-I and DSK-II), Lk, sNPF and the tachykinin peptides TK-1, TK-2, TK-4 and TK-5. Functions in female fertility, memory formation and may also act in regulating insulin signaling and food intake. Likely to be involved in controlling feeding behavior and the expression of insulin-like peptides by cleaving various regulatory peptides that include certain Drosulfakinins, Allatostatins and tachykinin peptides. Required in females for normal patterns of egg laying and hatching. Required in the dorsal paired medial neurons for the proper formation of long-term (LTM) and middle-term memories (MTM). Also required in the mushroom body neurons where it functions redundantly with neprilysins Nep2 and Nep3, in normal LTM formation. Cleaves angiotensin-1 and tachykinin neuropeptide substance P. Functions in maintaining muscle integrity, possibly independently of its endopeptidase activity. In Drosophila melanogaster (Fruit fly), this protein is Neprilysin-4.